Consider the following 433-residue polypeptide: MVNVVLGSQWGDEGKGKLVDLLVGKYDIVARCAGGNNAGHTIVVDGVKYDFHMLPSGLVNPNCQNLLGNGVVIHVPSFFKELETLEAKGLKNARSRLFVSSRAHLVFDFHQVTDKLRELELSGRSKDGKNIGTTGKGIGPTYSTKASRSGLRVHHLVNDQPGAWEEFVARYKRLLETRRQRYGDFEYDFEAKLAEYKKLREQLKPFVVDSVVFMHNAIEAKKKILVEGANALMLDIDFGTYPYVTSSNTGIGGVLTGLGIPPRTIDEIYGVVKAYTTRVGEGPFPTEQLNENGEKLQTIGAEFGVTTGRKRRCGWLDLVVLKYSTLINGYTSLNITKLDVLDTFKEIPVGISYSIQGKKLDLFPEDLNILGKVEVEYKVLPGWDQDITKITKYEDLPENAKKYLKYIEDFVGVPVEWVGTGPARESMLHKEIK.

GTP-binding positions include 11 to 17 (GDEGKGK) and 39 to 41 (GHT). Asp12 serves as the catalytic Proton acceptor. Residues Asp12 and Gly39 each coordinate Mg(2+). IMP contacts are provided by residues 12 to 15 (DEGK), 37 to 40 (NAGH), Thr134, Arg148, Asn230, Thr245, and Arg309. His40 (proton donor) is an active-site residue. 305-311 (VTTGRKR) contacts substrate. GTP is bound by residues Arg311, 337 to 339 (KLD), and 419 to 421 (GTG).

The protein belongs to the adenylosuccinate synthetase family. As to quaternary structure, homodimer. Mg(2+) is required as a cofactor.

The protein localises to the cytoplasm. The catalysed reaction is IMP + L-aspartate + GTP = N(6)-(1,2-dicarboxyethyl)-AMP + GDP + phosphate + 2 H(+). It participates in purine metabolism; AMP biosynthesis via de novo pathway; AMP from IMP: step 1/2. Plays an important role in the de novo pathway and in the salvage pathway of purine nucleotide biosynthesis. Catalyzes the first committed step in the biosynthesis of AMP from IMP. The protein is Adenylosuccinate synthetase of Saccharomyces cerevisiae (strain JAY291) (Baker's yeast).